We begin with the raw amino-acid sequence, 181 residues long: MLIYKDIFTDDELSSDSFPMKLVDDLIYEFKGRHVVRKEGDIILAGSNPSAEEGAEDEGSDEHVERGIDIVLNHKLVEMNCYEDASMFKAYIKKFMKNIIDHMEKNNRDKADVDAFKKKIQAWVVSLLAKDRFKNLAFFIGERAAEGAENGQVAIIEYRDVDGTEVPTLMLVKEAILEEKC.

In terms of domain architecture, TCTP spans 1 to 181 (MLIYKDIFTD…VKEAILEEKC (181 aa)).

Belongs to the TCTP family.

It localises to the cytoplasm. Functionally, involved in calcium binding and microtubule stabilization. This Caenorhabditis briggsae protein is Translationally-controlled tumor protein homolog (tct-1).